The following is a 398-amino-acid chain: Flavohemoprotein (398 aa).

Residues 9–147 enclose the Globin domain; the sequence is QLTPAQIKII…LAKLLIDLEA (139 aa). Heme b is bound at residue H93. Active-site charge relay system residues include Y103 and E146. The reductase stretch occupies residues 155–398; that stretch reads WRWFKDFKVT…KLEYFGPYDP (244 aa). One can recognise an FAD-binding FR-type domain in the interval 156–263; sequence RWFKDFKVTR…APPAGNFVYD (108 aa). FAD-binding positions include Y196 and 212-215; that span reads REYS. 276 to 281 contacts NADP(+); it reads GIGITP. Residue 395 to 398 participates in FAD binding; it reads PYDP.

This sequence belongs to the globin family. FAD is required as a cofactor. The cofactor is heme b.

It is found in the cytoplasm. The catalysed reaction is 2 nitric oxide + NADPH + 2 O2 = 2 nitrate + NADP(+) + H(+). It carries out the reaction 2 nitric oxide + NADH + 2 O2 = 2 nitrate + NAD(+) + H(+). With respect to regulation, inhibited by imidazoles. Its function is as follows. Nitric oxide dioxygenase involved in NO detoxification in an aerobic process, termed nitric oxide dioxygenase (NOD) reaction that utilizes O(2) and NAD(P)H to convert NO to nitrate, which protects the fungus from various noxious nitrogen compounds. Therefore, plays a central role in the inducible response to nitrosative stress. Plays a role in virulence since nitric oxide is generated by macrophages of the host immune system. The chain is Flavohemoprotein (YHB1) from Candida albicans (strain SC5314 / ATCC MYA-2876) (Yeast).